A 223-amino-acid polypeptide reads, in one-letter code: MSPDTLIIRQLGLQPWAPVSLAMHQFTDQRNDETPDEIWLVEHLPVFTQGQAGKSEHLLMPGDIPVMQSDRGGQVTYHGPGQQVMYVMINLKRRRVGVRQLVTAIEQTVVDTLAAFSVSANARSDAPGVYVDGKKICSLGLRIRQGCSFHGLALNVDMDLSPFQRINPCGYAGLEMTQLTQQHPGATLAAVQPLLIAHFAHHLAITDIDWREDPSLPFSSLRH.

In terms of domain architecture, BPL/LPL catalytic spans 32 to 207 (DETPDEIWLV…HFAHHLAITD (176 aa)). Substrate contacts are provided by residues 71–78 (RGGQVTYH), 138–140 (SLG), and 151–153 (GLA). Cys-169 serves as the catalytic Acyl-thioester intermediate.

The protein belongs to the LipB family.

It is found in the cytoplasm. It catalyses the reaction octanoyl-[ACP] + L-lysyl-[protein] = N(6)-octanoyl-L-lysyl-[protein] + holo-[ACP] + H(+). It participates in protein modification; protein lipoylation via endogenous pathway; protein N(6)-(lipoyl)lysine from octanoyl-[acyl-carrier-protein]: step 1/2. Its function is as follows. Catalyzes the transfer of endogenously produced octanoic acid from octanoyl-acyl-carrier-protein onto the lipoyl domains of lipoate-dependent enzymes. Lipoyl-ACP can also act as a substrate although octanoyl-ACP is likely to be the physiological substrate. This is Octanoyltransferase from Erwinia tasmaniensis (strain DSM 17950 / CFBP 7177 / CIP 109463 / NCPPB 4357 / Et1/99).